Consider the following 380-residue polypeptide: Growth-regulating factor 4 (380 aa).

The segment at 1-21 (MDLQLKQWRSQQQNESEEQGS) is disordered. The region spanning 82–117 (FFSWAQWQELELQALIYRYMLAGASVPQELLLPIKK) is the QLQ domain. Positions 151–195 (DPEPGRCKRTDGKKWRCSRDVVAGHKYCDRHIHRGRNRSRKPVET) constitute a WRC domain. 2 consecutive short sequence motifs (bipartite nuclear localization signal) follow at residues 156–166 (RCKRTDGKKWR) and 184–191 (RGRNRSRK). Disordered regions lie at residues 222–270 (NNNH…GRSD) and 284–330 (RSSD…NMRN). Composition is skewed to low complexity over residues 228-245 (SSGS…SCSS) and 285-296 (SSDSTSSPMSSS). Over residues 297–320 (TCHLSISMPGNNTSSDVSLKLSTG) the composition is skewed to polar residues.

It belongs to the GRF family. In terms of tissue distribution, strongly expressed in actively growing and developing tissues, such as roots, upper stems, and shoot tips containing the shoot apical meristem (SAM) and flower buds. Also expressed in mature flowers, but weakly expressed in mature stems and leaves.

The protein localises to the nucleus. In terms of biological role, transcription activator that plays a role in the regulation of cell expansion in leaf and cotyledons tissues. Component of a network formed by miR396, the GRFs and their interacting factors (GIFs) acting in the regulation of meristem function, at least partially through the control of cell proliferation. The protein is Growth-regulating factor 4 (GRF4) of Arabidopsis thaliana (Mouse-ear cress).